Consider the following 288-residue polypeptide: Small ribosomal subunit protein uS2 (288 aa).

Positions 267-288 (EEVEEVEEEFIPSEIEDEDEKF) are disordered.

It belongs to the universal ribosomal protein uS2 family.

This chain is Small ribosomal subunit protein uS2, found in Petrotoga mobilis (strain DSM 10674 / SJ95).